We begin with the raw amino-acid sequence, 177 residues long: MLKSIFAKRFASTGSYPGSTRITLPRRPAKKIQLGKSRPAIYHQFNVKMELSDGSVVIRRSQYPKGEIRLIQDQRNNPLWNPSRDDLVVVDANSGGSLDRFNKRYSSLFSVDSTTPNSSSETVELSEENKKKTQIKKEEKEDVSEKAFGMDDYLSLLDDSEQQIKSGKLASKKRDKK.

The N-terminal 14 residues, 1 to 14 (MLKSIFAKRFASTG), are a transit peptide targeting the mitochondrion. Residues 36 to 118 (KSRPAIYHQF…FSVDSTTPNS (83 aa)) form a sufficient for general mitochondrial translation region. Residues 87–177 (LVVVDANSGG…KLASKKRDKK (91 aa)) are sufficient for dosage suppression of COX2 mutation. The span at 111-123 (VDSTTPNSSSETV) shows a compositional bias: polar residues. The tract at residues 111–144 (VDSTTPNSSSETVELSEENKKKTQIKKEEKEDVS) is disordered. The span at 127–144 (EENKKKTQIKKEEKEDVS) shows a compositional bias: basic and acidic residues.

The protein belongs to the bacterial ribosomal protein bL31 family. Highly divergent. In terms of assembly, component of the mitochondrial large ribosomal subunit (mt-LSU). Mature yeast 74S mitochondrial ribosomes consist of a small (37S) and a large (54S) subunit. The 37S small subunit contains a 15S ribosomal RNA (15S mt-rRNA) and 34 different proteins. The 54S large subunit contains a 21S rRNA (21S mt-rRNA) and 46 different proteins.

Its subcellular location is the mitochondrion. In terms of biological role, component of the mitochondrial ribosome (mitoribosome), a dedicated translation machinery responsible for the synthesis of mitochondrial genome-encoded proteins, including at least some of the essential transmembrane subunits of the mitochondrial respiratory chain. The mitoribosomes are attached to the mitochondrial inner membrane and translation products are cotranslationally integrated into the membrane. Overexpression of bL31m suppresses mutations in the COX2 leader peptide-encoding and initiation codon regions. The polypeptide is Large ribosomal subunit protein bL31m (MRPL36) (Saccharomyces cerevisiae (strain ATCC 204508 / S288c) (Baker's yeast)).